A 451-amino-acid polypeptide reads, in one-letter code: Neuraminidase (451 aa).

Residues 1–6 (MNPNQK) are Intravirion-facing. The chain crosses the membrane as a helical span at residues 7 to 29 (IITIGSMSLTIATVCFLMQIAIL). The interval 11–33 (GSMSLTIATVCFLMQIAILATNV) is involved in apical transport and lipid raft association. The Virion surface portion of the chain corresponds to 30 to 451 (ATNVTLHFRQ…DGANINFMPL (422 aa)). Residues Asn-32, Asn-48, and Asn-66 are each glycosylated (N-linked (GlcNAc...) asparagine; by host). The hypervariable stalk region stretch occupies residues 36 to 68 (HFRQNEESIPAYNQTTPCKPIIIERNIKYRNWS). Residues 71 to 451 (QCQITGFAPF…DGANINFMPL (381 aa)) form a head of neuraminidase region. Disulfide bonds link Cys-72-Cys-399, Cys-104-Cys-109, Cys-163-Cys-210, Cys-212-Cys-217, Cys-258-Cys-272, Cys-260-Cys-270, Cys-300-Cys-319, and Cys-403-Cys-429. Substrate is bound at residue Arg-98. 2 N-linked (GlcNAc...) asparagine; by host glycosylation sites follow: Asn-123 and Asn-126. Asp-131 acts as the Proton donor/acceptor in catalysis. Arg-132 is a binding site for substrate. N-linked (GlcNAc...) asparagine; by host glycosylation is found at Asn-180 and Asn-214. 256–257 (EE) serves as a coordination point for substrate. Arg-273 lines the substrate pocket. Ca(2+) contacts are provided by Asp-274, Gly-278, and Asp-306. The disordered stretch occupies residues 307–331 (TPRNDDSSSSSNCRDPNNERGNPGV). Arg-353 contributes to the substrate binding site. Residue Asn-384 is glycosylated (N-linked (GlcNAc...) asparagine; by host). Tyr-388 (nucleophile) is an active-site residue.

It belongs to the glycosyl hydrolase 34 family. As to quaternary structure, homotetramer. Requires Ca(2+) as cofactor. In terms of processing, N-glycosylated.

The protein resides in the virion membrane. The protein localises to the host apical cell membrane. It catalyses the reaction Hydrolysis of alpha-(2-&gt;3)-, alpha-(2-&gt;6)-, alpha-(2-&gt;8)- glycosidic linkages of terminal sialic acid residues in oligosaccharides, glycoproteins, glycolipids, colominic acid and synthetic substrates.. Its activity is regulated as follows. Inhibited by the neuraminidase inhibitors zanamivir (Relenza) and oseltamivir (Tamiflu). These drugs interfere with the release of progeny virus from infected cells and are effective against all influenza strains. Resistance to neuraminidase inhibitors is quite rare. Its function is as follows. Catalyzes the removal of terminal sialic acid residues from viral and cellular glycoconjugates. Cleaves off the terminal sialic acids on the glycosylated HA during virus budding to facilitate virus release. Additionally helps virus spread through the circulation by further removing sialic acids from the cell surface. These cleavages prevent self-aggregation and ensure the efficient spread of the progeny virus from cell to cell. Otherwise, infection would be limited to one round of replication. Described as a receptor-destroying enzyme because it cleaves a terminal sialic acid from the cellular receptors. May facilitate viral invasion of the upper airways by cleaving the sialic acid moieties on the mucin of the airway epithelial cells. Likely to plays a role in the budding process through its association with lipid rafts during intracellular transport. May additionally display a raft-association independent effect on budding. Plays a role in the determination of host range restriction on replication and virulence. Sialidase activity in late endosome/lysosome traffic seems to enhance virus replication. The chain is Neuraminidase from Aves.